We begin with the raw amino-acid sequence, 156 residues long: Photosystem I reaction center subunit XI (156 aa).

The next 2 helical transmembrane spans lie at 75-95 (GGLL…SLYA) and 128-148 (FFIG…ALYF).

It belongs to the PsaL family.

Its subcellular location is the cellular thylakoid membrane. In Crocosphaera subtropica (strain ATCC 51142 / BH68) (Cyanothece sp. (strain ATCC 51142)), this protein is Photosystem I reaction center subunit XI.